The sequence spans 78 residues: Rubredoxin (78 aa).

Residues 23-74 (DARLECKICWWEYDPEVGDPVWQIAPGTSFSALPAHWRCPNCDGEAEQFMVL) form the Rubredoxin-like domain. The Fe cation site is built by Cys-28, Cys-31, Cys-61, and Cys-64.

The protein belongs to the rubredoxin family. Requires Fe(3+) as cofactor.

Functionally, rubredoxin is a small nonheme, iron protein lacking acid-labile sulfide. Its single Fe, chelated to 4 Cys, functions as an electron acceptor and may also stabilize the conformation of the molecule. Could be involved in hydrogenase-linked redox processes. The polypeptide is Rubredoxin (hoxR) (Cupriavidus necator (strain ATCC 17699 / DSM 428 / KCTC 22496 / NCIMB 10442 / H16 / Stanier 337) (Ralstonia eutropha)).